Here is a 695-residue protein sequence, read N- to C-terminus: DNA topoisomerase 4 subunit B (695 aa).

Positions 1-53 (MSSSDKIPSLFGDDDALAPVPAAPFKASVEPRVEPTPRPIPPPPPSKTASAPG) are disordered. Positions 36–46 (TPRPIPPPPPS) are enriched in pro residues. ATP contacts are provided by residues tyrosine 55, asparagine 95, aspartate 122, 164-170 (GLHGVGA), and lysine 397. Positions 477–591 (AELFIVEGDS…GGHLFLALPP (115 aa)) constitute a Toprim domain. Residues glutamate 483, aspartate 556, and aspartate 558 each contribute to the Mg(2+) site.

This sequence belongs to the type II topoisomerase family. ParE type 1 subfamily. In terms of assembly, heterotetramer composed of ParC and ParE. Mg(2+) is required as a cofactor. The cofactor is Mn(2+). Ca(2+) serves as cofactor.

The enzyme catalyses ATP-dependent breakage, passage and rejoining of double-stranded DNA.. Functionally, topoisomerase IV is essential for chromosome segregation. It relaxes supercoiled DNA. Performs the decatenation events required during the replication of a circular DNA molecule. In Caulobacter vibrioides (strain ATCC 19089 / CIP 103742 / CB 15) (Caulobacter crescentus), this protein is DNA topoisomerase 4 subunit B.